Reading from the N-terminus, the 396-residue chain is NADH-quinone oxidoreductase subunit D (396 aa).

Belongs to the complex I 49 kDa subunit family. In terms of assembly, NDH-1 is composed of 14 different subunits. Subunits NuoB, C, D, E, F, and G constitute the peripheral sector of the complex.

It is found in the cell inner membrane. The catalysed reaction is a quinone + NADH + 5 H(+)(in) = a quinol + NAD(+) + 4 H(+)(out). NDH-1 shuttles electrons from NADH, via FMN and iron-sulfur (Fe-S) centers, to quinones in the respiratory chain. The immediate electron acceptor for the enzyme in this species is believed to be ubiquinone. Couples the redox reaction to proton translocation (for every two electrons transferred, four hydrogen ions are translocated across the cytoplasmic membrane), and thus conserves the redox energy in a proton gradient. This is NADH-quinone oxidoreductase subunit D from Brucella melitensis biotype 1 (strain ATCC 23456 / CCUG 17765 / NCTC 10094 / 16M).